Consider the following 532-residue polypeptide: Nectin-4 (532 aa).

The signal sequence occupies residues 1–30; sequence MGPLHGALLPPISVTVSLLILLLCAPGGRC. An Ig-like V-type domain is found at 31 to 142; the sequence is GVVHTEKSMT…GNFDAELELK (112 aa). The Extracellular portion of the chain corresponds to 31 to 344; that stretch reads GVVHTEKSMT…TKIDLVSVSL (314 aa). Disulfide bonds link C51–C125, C169–C221, and C266–C312. Ig-like C2-type domains lie at 146–235 and 244–328; these read PPLP…KRIT and AEVS…AIVS. The disordered stretch occupies residues 152-179; that stretch reads GPGPPLTEGEGKSLAASCTAEGNPAPTL. 2 N-linked (GlcNAc...) asparagine glycosylation sites follow: N189 and N282. A helical transmembrane segment spans residues 345 to 365; the sequence is GSVGILTAVLLVVLVITLLLV. The Cytoplasmic segment spans residues 366 to 532; the sequence is NRHHKRQTKQ…IYINGRGHLV (167 aa). The tract at residues 453–491 is disordered; that stretch reads QTELLSTVPDEEVKEDGEEPEQVEQSLEKEPNPTEPDGM. Positions 461-474 are enriched in acidic residues; the sequence is PDEEVKEDGEEPEQ.

This sequence belongs to the nectin family.

The protein resides in the cell membrane. In terms of biological role, may be involved in cell adhesion. The polypeptide is Nectin-4 (Xenopus tropicalis (Western clawed frog)).